The following is a 381-amino-acid chain: N-acetylglucosamine-6-phosphate deacetylase (381 aa).

Glutamate 129 serves as a coordination point for a divalent metal cation. A substrate-binding site is contributed by 140–141 (VH). Residues histidine 193 and histidine 214 each coordinate a divalent metal cation. Substrate-binding positions include 217–218 (NA), arginine 226, and 246–249 (DGVH). Aspartate 271 serves as the catalytic Proton donor/acceptor. A substrate-binding site is contributed by 306–308 (IAG).

It belongs to the metallo-dependent hydrolases superfamily. NagA family. As to quaternary structure, homotetramer. It depends on a divalent metal cation as a cofactor.

It catalyses the reaction N-acetyl-D-glucosamine 6-phosphate + H2O = D-glucosamine 6-phosphate + acetate. The protein operates within amino-sugar metabolism; N-acetylneuraminate degradation; D-fructose 6-phosphate from N-acetylneuraminate: step 4/5. Functionally, involved in the first committed step in the biosynthesis of amino-sugar-nucleotides. Catalyzes the hydrolysis of the N-acetyl group of N-acetylglucosamine-6-phosphate (GlcNAc-6-P) to yield glucosamine 6-phosphate and acetate. The chain is N-acetylglucosamine-6-phosphate deacetylase (nagA) from Haemophilus influenzae (strain ATCC 51907 / DSM 11121 / KW20 / Rd).